The primary structure comprises 341 residues: tRNA N6-adenosine threonylcarbamoyltransferase (341 aa).

Fe cation-binding residues include His111 and His115. Substrate is bound by residues 134-138 (LVSGG), Asp167, Gly180, and Asn276. A Fe cation-binding site is contributed by Asp304.

This sequence belongs to the KAE1 / TsaD family. Requires Fe(2+) as cofactor.

The protein resides in the cytoplasm. It carries out the reaction L-threonylcarbamoyladenylate + adenosine(37) in tRNA = N(6)-L-threonylcarbamoyladenosine(37) in tRNA + AMP + H(+). Functionally, required for the formation of a threonylcarbamoyl group on adenosine at position 37 (t(6)A37) in tRNAs that read codons beginning with adenine. Is involved in the transfer of the threonylcarbamoyl moiety of threonylcarbamoyl-AMP (TC-AMP) to the N6 group of A37, together with TsaE and TsaB. TsaD likely plays a direct catalytic role in this reaction. In Ectopseudomonas mendocina (strain ymp) (Pseudomonas mendocina), this protein is tRNA N6-adenosine threonylcarbamoyltransferase.